Reading from the N-terminus, the 288-residue chain is MKLPIFIADAFTARAFRGDPAAVCLLENELDEDMHQKIAREMNLSETAFIRKLHPTDNFAQSSCFGLRWFTPASEVPLCGHATLASAAVLFHKIKNMTSMLTFVTLSGELRARRAEDGIILDFPLYPAHPQDFHEVEDLIKTAIGNTLVQDICYSPDTRKLLIRLSDVYDRSFLENLKVNTENLLQVENTGKVKGLILTLKGEPGGQTQAFDFYSRYFAPWVAVAEDPVTGSAHAVLSSYWSQHLGKKEMHAFQCSRRGGELGISLRPDGRVDITGSAAVVLEGTLTV.

Residue E46 is part of the active site.

This sequence belongs to the PhzF family. As to quaternary structure, interacts with UNRIP/MAWD.

In Pongo abelii (Sumatran orangutan), this protein is Phenazine biosynthesis-like domain-containing protein (PBLD).